The primary structure comprises 243 residues: tRNA pseudouridine synthase A (243 aa).

Aspartate 54 (nucleophile) is an active-site residue. A substrate-binding site is contributed by tyrosine 112.

The protein belongs to the tRNA pseudouridine synthase TruA family. In terms of assembly, homodimer.

The enzyme catalyses uridine(38/39/40) in tRNA = pseudouridine(38/39/40) in tRNA. Functionally, formation of pseudouridine at positions 38, 39 and 40 in the anticodon stem and loop of transfer RNAs. This is tRNA pseudouridine synthase A from Onion yellows phytoplasma (strain OY-M).